Consider the following 172-residue polypeptide: Large ribosomal subunit protein uL10 (172 aa).

It belongs to the universal ribosomal protein uL10 family. Part of the ribosomal stalk of the 50S ribosomal subunit. The N-terminus interacts with L11 and the large rRNA to form the base of the stalk. The C-terminus forms an elongated spine to which L12 dimers bind in a sequential fashion forming a multimeric L10(L12)X complex.

Its function is as follows. Forms part of the ribosomal stalk, playing a central role in the interaction of the ribosome with GTP-bound translation factors. The polypeptide is Large ribosomal subunit protein uL10 (Methylorubrum populi (strain ATCC BAA-705 / NCIMB 13946 / BJ001) (Methylobacterium populi)).